The sequence spans 334 residues: Glyoxylate reductase (334 aa).

NADP(+) is bound by residues 158–161 (FGRI), 180–182 (SRT), and 239–241 (IAR). Catalysis depends on residues Arg241 and Glu270. His288 functions as the Proton donor in the catalytic mechanism. Position 288–290 (288–290 (HIG)) interacts with NADP(+).

This sequence belongs to the D-isomer specific 2-hydroxyacid dehydrogenase family. GyaR subfamily. Homodimer.

It localises to the cytoplasm. It catalyses the reaction glycolate + NAD(+) = glyoxylate + NADH + H(+). The polypeptide is Glyoxylate reductase (Thermococcus gammatolerans (strain DSM 15229 / JCM 11827 / EJ3)).